A 295-amino-acid chain; its full sequence is GTPase Era (295 aa).

One can recognise an Era-type G domain in the interval 7–176; the sequence is KTVSVCIIGR…ITSKAKIAPW (170 aa). Residues 15-22 form a G1 region; it reads GRPNSGKS. 15–22 lines the GTP pocket; it reads GRPNSGKS. The tract at residues 41–45 is G2; the sequence is QTTRS. The G3 stretch occupies residues 62–65; it reads DTPG. GTP-binding positions include 62-66 and 124-127; these read DTPGI and NKID. Positions 124-127 are G4; sequence NKID. The tract at residues 152 to 154 is G5; that stretch reads ISA. Residues 204–281 enclose the KH type-2 domain; sequence LQQELPYKLT…HLFLFVKVQE (78 aa).

It belongs to the TRAFAC class TrmE-Era-EngA-EngB-Septin-like GTPase superfamily. Era GTPase family. Monomer.

It localises to the cytoplasm. Its subcellular location is the cell inner membrane. Functionally, an essential GTPase that binds both GDP and GTP, with rapid nucleotide exchange. Plays a role in 16S rRNA processing and 30S ribosomal subunit biogenesis and possibly also in cell cycle regulation and energy metabolism. The protein is GTPase Era of Rickettsia bellii (strain RML369-C).